The chain runs to 244 residues: High frequency lysogenization protein HflD homolog (244 aa).

Belongs to the HflD family.

The protein localises to the cytoplasm. It is found in the cell inner membrane. In Acinetobacter baumannii (strain SDF), this protein is High frequency lysogenization protein HflD homolog.